The following is a 454-amino-acid chain: Glutaredoxin domain-containing cysteine-rich protein CG31559 (454 aa).

Disordered regions lie at residues 30–88 (ETAD…QRQK) and 217–239 (RSARSGDEADHSTGAGSEAGSDS). Over residues 33 to 45 (DSGNGSDLESTGL) the composition is skewed to polar residues. A compositionally biased stretch (low complexity) spans 58 to 69 (SSLGSDSMHGSS). Polar residues predominate over residues 70–84 (TEYVRQSASQPSGQR). Over residues 217–227 (RSARSGDEADH) the composition is skewed to basic and acidic residues. One can recognise a Glutaredoxin domain in the interval 295-400 (NAKNFKEKDL…QLLKPYKSMA (106 aa)).

The protein belongs to the GRXCR1 family.

The protein is Glutaredoxin domain-containing cysteine-rich protein CG31559 of Drosophila melanogaster (Fruit fly).